A 113-amino-acid chain; its full sequence is MICLKILRFYQKFLSPLKPAACRYYPSCSEYALWQFQKKNFFLAFLSTFFRILRCNPFFKGGFDYPKVSKNFYPMNLCFKPMFLAKKQLCFLYIPYKNKSFYLIKIIFKRTNQ.

This sequence belongs to the UPF0161 family.

Its subcellular location is the cell inner membrane. Its function is as follows. Could be involved in insertion of integral membrane proteins into the membrane. The protein is Putative membrane protein insertion efficiency factor of Campylobacter jejuni subsp. doylei (strain ATCC BAA-1458 / RM4099 / 269.97).